We begin with the raw amino-acid sequence, 467 residues long: UDP-N-acetylmuramoylalanine--D-glutamate ligase (467 aa).

121–127 (GTNGKST) lines the ATP pocket.

This sequence belongs to the MurCDEF family.

It is found in the cytoplasm. The catalysed reaction is UDP-N-acetyl-alpha-D-muramoyl-L-alanine + D-glutamate + ATP = UDP-N-acetyl-alpha-D-muramoyl-L-alanyl-D-glutamate + ADP + phosphate + H(+). It participates in cell wall biogenesis; peptidoglycan biosynthesis. Functionally, cell wall formation. Catalyzes the addition of glutamate to the nucleotide precursor UDP-N-acetylmuramoyl-L-alanine (UMA). The chain is UDP-N-acetylmuramoylalanine--D-glutamate ligase from Chelativorans sp. (strain BNC1).